A 439-amino-acid polypeptide reads, in one-letter code: 23S rRNA (uracil(1939)-C(5))-methyltransferase RlmD (439 aa).

The TRAM domain occupies 10-69 (KTQLNTRHQAVQVERLDHHGAGIAYLKKKPLFIDGALPGEEVVTQLVEEKSKFARGKLIK). Residues C82, C88, C91, and C169 each contribute to the [4Fe-4S] cluster site. Residues Q272, F301, N306, E322, N349, and D370 each coordinate S-adenosyl-L-methionine. C396 functions as the Nucleophile in the catalytic mechanism.

This sequence belongs to the class I-like SAM-binding methyltransferase superfamily. RNA M5U methyltransferase family. RlmD subfamily.

The catalysed reaction is uridine(1939) in 23S rRNA + S-adenosyl-L-methionine = 5-methyluridine(1939) in 23S rRNA + S-adenosyl-L-homocysteine + H(+). Catalyzes the formation of 5-methyl-uridine at position 1939 (m5U1939) in 23S rRNA. The sequence is that of 23S rRNA (uracil(1939)-C(5))-methyltransferase RlmD from Vibrio campbellii (strain ATCC BAA-1116).